A 266-amino-acid chain; its full sequence is Integral membrane protein 2B (266 aa).

At 1 to 54 (MVKVTFNSALAQKEAKKDESKSGEEALIIPPDAVAVDCKDPDEVVPVGQRRAWC) the chain is on the cytoplasmic side. Residues 55-75 (WCMCFGLAFMLAGVILGGAYL) form a helical; Signal-anchor for type II membrane protein membrane-spanning segment. The Lumenal segment spans residues 76–266 (YKYFAFQPDD…RFAVETLICP (191 aa)). The tract at residues 102-134 (EPSADAPASRYQTIEENIKIFEEDEVEFISVPV) is necessary for interaction with APP and inhibitor effects on APP processing. The BRICHOS domain occupies 137–231 (FADSDPANIV…LCHDKETYKL (95 aa)). Cystine bridges form between C164–C223 and C248–C265. A glycan (N-linked (GlcNAc...) asparagine) is linked at N170.

It belongs to the ITM2 family. In terms of assembly, homodimer; disulfide-linked. Interacts with SPPL2A and SPPL2B. Interacts with APP. Mature BRI2 (mBRI2) interacts with the APP amyloid-beta A4 protein; the interaction occurs at the cell surface and in the endocytic compartments and enable alpha- and beta-secretase-induced APP cleavage inhibition. Mature BRI2 (mBRI2) interacts with the APP C99; the interaction occurs in the endocytic compartments and enable gamma-secretase-induced C99 cleavage inhibition. May form heterodimers with Bri23 peptide and APP amyloid-beta protein 40. Interacts with ADAM7 in sperm; the interaction increases following capacitation. Post-translationally, the ectodomain C-terminal part of the imBRI2 is processed by furin producing a secreted Bri23 peptide and a mature BRI2, membrane form (mBRI2). The remaining part of the ectodomain of mBRI2 containing the BRICHOS domain is cleaved by ADAM10 and is secreted (BRI2C, soluble form). The membrane-bound N-terminal fragment (BRI2C, membrane form) is further proteolytically processed by SPPL2A and SPPL2B through regulated intramembrane proteolysis producing a secreted C-peptide and a BRI2 intracellular domain (BRI2 ICD) released in the cytosol. Shedding by ADAM10 facilitates intramembrane cleavage but is not absolutely required for BRI2 ICD generation. In terms of processing, glycosylation at Asn-170 is important for cell surface localization, but doesn't affect furin- and ADAM10-induced proteolytic processing.

The protein localises to the golgi apparatus membrane. Its subcellular location is the cell membrane. It is found in the endosome membrane. It localises to the secreted. Its function is as follows. Plays a regulatory role in the processing of the amyloid-beta A4 precursor protein (APP) and acts as an inhibitor of the amyloid-beta peptide aggregation and fibrils deposition. Plays a role in the induction of neurite outgrowth. Functions as a protease inhibitor by blocking access of secretases to APP cleavage sites. Functionally, mature BRI2 (mBRI2) functions as a modulator of the amyloid-beta A4 precursor protein (APP) processing leading to a strong reduction in the secretion of secretase-processed amyloid-beta protein 40 and amyloid-beta protein 42. In terms of biological role, bri23 peptide prevents aggregation of APP amyloid-beta protein 42 into toxic oligomers. The polypeptide is Integral membrane protein 2B (ITM2B) (Bos taurus (Bovine)).